Here is a 421-residue protein sequence, read N- to C-terminus: MPRNIEPLDLGIQIPYHFRCPISLELMQDPVTVCTGQTYDRASIESWVSIGNNTTCPVTRAPLSDFTLIPNHTLRRLIQEWCVANRSNGVERIPTPKQPADPTSVRALLSQASAITGTHVSVRSRAAALRRLRGFARDSDKNRVLIAAHNATEILIKILFSETTSSELVSESLALLVMLPITEPNQFVSISSDPGRVEFLTRLLFDSSIETRVNAAALIEIVSTGTKSADLKGSISNSESVFEGVLDLLRNPISSRRALKIGIKTLFALCSVKSTRHIAITAGAPEILIDRLAADFDRCDTERALATVELLCRTPEGCAAFGEHALTVPLLVKTILRVSDRATEYAAGALLALCTAEERWREEAAGAGVVVQLLLMVQSECTERAKKKAQKLLKLLRDSWPDYNSFANSDDFGCSSQVVPF.

Residues 13-88 enclose the U-box domain; it reads QIPYHFRCPI…QEWCVANRSN (76 aa).

It catalyses the reaction S-ubiquitinyl-[E2 ubiquitin-conjugating enzyme]-L-cysteine + [acceptor protein]-L-lysine = [E2 ubiquitin-conjugating enzyme]-L-cysteine + N(6)-ubiquitinyl-[acceptor protein]-L-lysine.. It participates in protein modification; protein ubiquitination. In terms of biological role, functions as an E3 ubiquitin ligase. The polypeptide is U-box domain-containing protein 25 (PUB25) (Arabidopsis thaliana (Mouse-ear cress)).